A 167-amino-acid polypeptide reads, in one-letter code: Type IV major pilin protein PilE (167 aa).

The propeptide at 1-7 is leader sequence; it reads MNTLQKG. An N-methylphenylalanine modification is found at phenylalanine 8. A helical transmembrane segment spans residues 8 to 28; that stretch reads FTLIELMIVIAIVGILAAVAL. Serine 70 is a glycosylation site (O-linked (GlcNAc...) serine). Residues cysteine 127 and cysteine 160 are joined by a disulfide bond.

It belongs to the N-Me-Phe pilin family. In terms of assembly, the pili are polar flexible filaments of about 5.4 nanometers diameter and 2.5 micrometers average length; they consist of only a single polypeptide chain arranged in a helical configuration of five subunits per turn in the assembled pilus.

The protein resides in the fimbrium. Its subcellular location is the membrane. Its function is as follows. Major component of the type IV pilus (T4P) that plays a role in cellular adherence, microcolony formation, resistance to neutrophil mediated killing, twitching motility as well as transformation. Mediates the attachment and the formation of bacterial microcolonies on host epithelial cells. Mechanistically, pili retractation induces host NF-kappa-B activation in infected cells, which is temporally associated with the formation of gonococcal microcolonies. This is Type IV major pilin protein PilE (pilE) from Neisseria gonorrhoeae.